A 156-amino-acid polypeptide reads, in one-letter code: Small ribosomal subunit protein uS7 (156 aa).

The protein belongs to the universal ribosomal protein uS7 family. In terms of assembly, part of the 30S ribosomal subunit. Contacts proteins S9 and S11.

One of the primary rRNA binding proteins, it binds directly to 16S rRNA where it nucleates assembly of the head domain of the 30S subunit. Is located at the subunit interface close to the decoding center, probably blocks exit of the E-site tRNA. The protein is Small ribosomal subunit protein uS7 of Brucella abortus (strain S19).